The primary structure comprises 354 residues: Maleylacetate reductase 1 (354 aa).

This sequence belongs to the iron-containing alcohol dehydrogenase family. In terms of assembly, homodimer.

It catalyses the reaction 3-oxoadipate + NAD(+) = maleylacetate + NADH + H(+). It carries out the reaction 3-oxoadipate + NADP(+) = maleylacetate + NADPH + H(+). It participates in aromatic compound metabolism; 3-chlorocatechol degradation. This Cupriavidus pinatubonensis (strain JMP 134 / LMG 1197) (Cupriavidus necator (strain JMP 134)) protein is Maleylacetate reductase 1 (tfdFI).